We begin with the raw amino-acid sequence, 265 residues long: Homeobox protein engrailed-2-A (265 aa).

2 stretches are compositionally biased toward basic and acidic residues: residues 1–12 (MEENEQNNREVE) and 102–115 (GEKK…ETLK). Disordered stretches follow at residues 1 to 38 (MEEN…QPHH), 75 to 140 (LSGA…KATQ), and 156 to 181 (DRPS…RPRT). Positions 122–136 (DHSLSSDSDSSQTSS) are enriched in low complexity. The homeobox DNA-binding region spans 176–235 (DKRPRTAFTADQLQRLKAEFQTNRYLTEQRRQSLAQELSLNESQIKIWFQNKRAKIKKAT).

The protein belongs to the engrailed homeobox family.

It localises to the nucleus. This is Homeobox protein engrailed-2-A (en2-a) from Xenopus laevis (African clawed frog).